Here is a 385-residue protein sequence, read N- to C-terminus: GDP-D-glucose phosphorylase 1 (385 aa).

Catalysis depends on His-218, which acts as the Tele-GMP-histidine intermediate.

This sequence belongs to the GDPGP1 family.

Its subcellular location is the cytoplasm. The catalysed reaction is GDP-alpha-D-glucose + phosphate = alpha-D-glucose 1-phosphate + GDP + H(+). Specific and highly efficient GDP-D-glucose phosphorylase regulating the levels of GDP-D-glucose in cells. The polypeptide is GDP-D-glucose phosphorylase 1 (GDPGP1) (Macaca fascicularis (Crab-eating macaque)).